The chain runs to 440 residues: C-terminal-binding protein 1 (440 aa).

The interval 1–70 is interaction with GLIS2 1; the sequence is MGSSHLLNKG…EIHEKVLNEA (70 aa). Residues Ser100, 180-185, Asp204, 237-243, 264-266, and Asp290 each bind NAD(+); these read IGLGRV, CGLNEHN, and TAR. Residue Arg266 is part of the active site. An interaction with GLIS2 2 region spans residues 288 to 360; it reads ALDVHESEPF…VNKDHLTAAT (73 aa). Glu295 is a catalytic residue. Phosphoserine is present on Ser300. The active-site Proton donor is the His315. An NAD(+)-binding site is contributed by 315–318; it reads HAAW. Residues 408 to 440 are disordered; it reads SHGLPPVAHPPHAPSPGQTVKPEADRDHASDQL. Phosphoserine; by HIPK2 is present on Ser422. A Glycyl lysine isopeptide (Lys-Gly) (interchain with G-Cter in SUMO) cross-link involves residue Lys428. Over residues 429–440 the composition is skewed to basic and acidic residues; sequence PEADRDHASDQL.

It belongs to the D-isomer specific 2-hydroxyacid dehydrogenase family. As to quaternary structure, homo- or heterodimer. Heterodimer with CTBP2. Interacts with PRDM16; the interaction represses white adipose tissue (WAT)-specific genes expression. Interacts with GLIS2, FOXP2, HDAC4, HDAC5, HDAC9 and ZNF217. Interacts with ELK3 (via its PXDLS motif). Interacts with RBBP8 (via its PXDLS motif); the interaction is disrupted by binding to adenovirus E1A. Interacts with FOXP1, HIPK2, PNN, NRIP1, MECOM, ZFHX1B and WIZ. Interacts with ZNF366 (via PXDLS motif). Interaction with SATB1 (non-acetylated form); the interaction stabilizes its attachment to DNA and promotes transcription repression. Interacts with BCL6; the interaction is required for BCL6 transcriptional autoinhibition and inhibition of some BCL6 target genes. Interacts with IKZF4. Interacts with MCRIP1 (unphosphorylated form, via the PXDLS motif); competitively inhibiting CTBP-ZEB1 interaction. Interacts with Bassoon/BSN; this interaction targets and anchors CTBP1 to presynapses. Interacts with SIMC1. (Microbial infection) Interacts with Epstein-Barr virus EBNA3. Interacts with Epstein-Barr virus EBNA6; this interaction leads to gene repression, but also seems to interfere with the repressive function of CtBP pre-bound to DNA, leading to EBNA6 mediated up-regulation of many cellular genes. In terms of assembly, (Microbial infection) Interacts with adenovirus E1A protein (via its C-terminus); the interaction disrupts the interaction of CTBP1 with RBBP8. As to quaternary structure, (Microbial infection) Interacts with human adenovirus 5 E1A protein; this interaction seems to potentiate viral replication. The cofactor is NAD(+). Post-translationally, the level of phosphorylation appears to be regulated during the cell cycle. Phosphorylation by HIPK2 on Ser-422 induces proteasomal degradation. In terms of processing, ADP-ribosylated; when cells are exposed to brefeldin A. Sumoylation on Lys-428 is promoted by the E3 SUMO-protein ligase CBX4. Expressed in germinal center B-cells.

Its subcellular location is the cytoplasm. It is found in the nucleus. In terms of biological role, corepressor targeting diverse transcription regulators such as GLIS2 or BCL6. Has dehydrogenase activity. Involved in controlling the equilibrium between tubular and stacked structures in the Golgi complex. Functions in brown adipose tissue (BAT) differentiation. This Homo sapiens (Human) protein is C-terminal-binding protein 1 (CTBP1).